Consider the following 620-residue polypeptide: Chaperone protein HscA homolog (620 aa).

This sequence belongs to the heat shock protein 70 family.

Functionally, chaperone involved in the maturation of iron-sulfur cluster-containing proteins. Has a low intrinsic ATPase activity which is markedly stimulated by HscB. This Pseudomonas syringae pv. tomato (strain ATCC BAA-871 / DC3000) protein is Chaperone protein HscA homolog.